Reading from the N-terminus, the 480-residue chain is Ribulose bisphosphate carboxylase large chain (480 aa).

The propeptide occupies 1-2; that stretch reads MS. Residue P3 is modified to N-acetylproline. K14 is subject to N6,N6,N6-trimethyllysine. Substrate-binding residues include N123 and T173. The active-site Proton acceptor is K175. Residue K177 coordinates substrate. K201, D203, and E204 together coordinate Mg(2+). K201 carries the post-translational modification N6-carboxylysine. H294 functions as the Proton acceptor in the catalytic mechanism. Residues R295, H327, and S379 each contribute to the substrate site.

It belongs to the RuBisCO large chain family. Type I subfamily. As to quaternary structure, heterohexadecamer of 8 large chains and 8 small chains; disulfide-linked. The disulfide link is formed within the large subunit homodimers. Requires Mg(2+) as cofactor. Post-translationally, the disulfide bond which can form in the large chain dimeric partners within the hexadecamer appears to be associated with oxidative stress and protein turnover.

The protein resides in the plastid. It is found in the chloroplast. The enzyme catalyses 2 (2R)-3-phosphoglycerate + 2 H(+) = D-ribulose 1,5-bisphosphate + CO2 + H2O. It catalyses the reaction D-ribulose 1,5-bisphosphate + O2 = 2-phosphoglycolate + (2R)-3-phosphoglycerate + 2 H(+). RuBisCO catalyzes two reactions: the carboxylation of D-ribulose 1,5-bisphosphate, the primary event in carbon dioxide fixation, as well as the oxidative fragmentation of the pentose substrate in the photorespiration process. Both reactions occur simultaneously and in competition at the same active site. This Rivina humilis (Rougeplant) protein is Ribulose bisphosphate carboxylase large chain.